A 147-amino-acid chain; its full sequence is UPF0735 ACT domain-containing protein Cthe_1377 (147 aa).

Residues 71-146 (TLFFTVEDYA…GVKRQEILAR (76 aa)) enclose the ACT domain.

The protein belongs to the UPF0735 family.

This is UPF0735 ACT domain-containing protein Cthe_1377 from Acetivibrio thermocellus (strain ATCC 27405 / DSM 1237 / JCM 9322 / NBRC 103400 / NCIMB 10682 / NRRL B-4536 / VPI 7372) (Clostridium thermocellum).